Here is a 376-residue protein sequence, read N- to C-terminus: Dehydrogenase/reductase SDR family member FEY (376 aa).

N-acetylserine is present on serine 2. 61-85 (VVTGSTSGIGRETARQLAEAGAHVV) provides a ligand contact to NAD(+). Serine 199 lines the substrate pocket. The active-site Proton acceptor is tyrosine 227.

The protein belongs to the short-chain dehydrogenases/reductases (SDR) family. In terms of tissue distribution, expressed in roots, stems, leaves and flowers and, at lower levels, in siliques.

Putative oxidoreductase. Required for vegetative shoot apex development, especially during leaf positioning and for shoot apical meristem (SAM) maintenance. The protein is Dehydrogenase/reductase SDR family member FEY of Arabidopsis thaliana (Mouse-ear cress).